Reading from the N-terminus, the 477-residue chain is Bifunctional protein HldE (477 aa).

A ribokinase region spans residues Met1–Thr318. The residue at position 179 (Lys179) is an N6-acetyllysine. An ATP-binding site is contributed by Asn195 to Glu198. Asp264 is an active-site residue. Residues Met344–Gly477 form a cytidylyltransferase region.

It in the N-terminal section; belongs to the carbohydrate kinase PfkB family. This sequence in the C-terminal section; belongs to the cytidylyltransferase family. As to quaternary structure, homodimer.

It catalyses the reaction D-glycero-beta-D-manno-heptose 7-phosphate + ATP = D-glycero-beta-D-manno-heptose 1,7-bisphosphate + ADP + H(+). It carries out the reaction D-glycero-beta-D-manno-heptose 1-phosphate + ATP + H(+) = ADP-D-glycero-beta-D-manno-heptose + diphosphate. Its pathway is nucleotide-sugar biosynthesis; ADP-L-glycero-beta-D-manno-heptose biosynthesis; ADP-L-glycero-beta-D-manno-heptose from D-glycero-beta-D-manno-heptose 7-phosphate: step 1/4. It functions in the pathway nucleotide-sugar biosynthesis; ADP-L-glycero-beta-D-manno-heptose biosynthesis; ADP-L-glycero-beta-D-manno-heptose from D-glycero-beta-D-manno-heptose 7-phosphate: step 3/4. Functionally, catalyzes the phosphorylation of D-glycero-D-manno-heptose 7-phosphate at the C-1 position to selectively form D-glycero-beta-D-manno-heptose-1,7-bisphosphate. In terms of biological role, catalyzes the ADP transfer from ATP to D-glycero-beta-D-manno-heptose 1-phosphate, yielding ADP-D-glycero-beta-D-manno-heptose. This chain is Bifunctional protein HldE, found in Escherichia coli O17:K52:H18 (strain UMN026 / ExPEC).